Here is an 822-residue protein sequence, read N- to C-terminus: Cadherin-3 (822 aa).

A signal peptide spans 1-25 (MELLSGPHAFLLLLLQVCWLRSVVS). Positions 26-99 (EPYRAGFIGE…PTRILRRRKR (74 aa)) are excised as a propeptide. 5 consecutive Cadherin domains span residues 100–207 (EWVM…KPKF), 208–320 (TQDT…APEF), 321–432 (EPQK…APVF), 433–538 (VPPS…DHGP), and 539–645 (IPEP…RPWK). At 100-647 (EWVMPPIFVP…NDCPRPWKGG (548 aa)) the chain is on the extracellular side. The N-linked (GlcNAc...) asparagine glycan is linked to Asn-192. Residue Asn-558 is glycosylated (N-linked (GlcNAc...) asparagine). A helical membrane pass occupies residues 648–670 (FILPILGAVLALLTLLLALLLLV). Over 671–822 (RKKRKVKEPL…ADMYGGGEDD (152 aa)) the chain is Cytoplasmic.

Interacts with CDCP1 and CTNNB1.

Its subcellular location is the cell membrane. Cadherins are calcium-dependent cell adhesion proteins. They preferentially interact with themselves in a homophilic manner in connecting cells; cadherins may thus contribute to the sorting of heterogeneous cell types. This is Cadherin-3 (Cdh3) from Mus musculus (Mouse).